The primary structure comprises 448 residues: Trigger factor (448 aa).

The region spanning Gly-172–Pro-257 is the PPIase FKBP-type domain.

Belongs to the FKBP-type PPIase family. Tig subfamily.

The protein resides in the cytoplasm. It carries out the reaction [protein]-peptidylproline (omega=180) = [protein]-peptidylproline (omega=0). Its function is as follows. Involved in protein export. Acts as a chaperone by maintaining the newly synthesized protein in an open conformation. Functions as a peptidyl-prolyl cis-trans isomerase. The polypeptide is Trigger factor (Paraburkholderia xenovorans (strain LB400)).